We begin with the raw amino-acid sequence, 140 residues long: MEQELMRIGVSLPDNLLNKFDSIIEGRGYSSRSEGIRDSIRTYINQYEWMSDIRGRRVGTITIIYDHTKRGLSNAVADIQHDYSDLIKSSVHIHLDHDNCLEVIIFDGEGELIKEMDERLMALKGVKYVKLNTAPPAEKI.

Residues H81, H92, H94, and C100 each contribute to the Ni(2+) site.

Belongs to the transcriptional regulatory CopG/NikR family. The cofactor is Ni(2+).

Its function is as follows. Transcriptional regulator. The polypeptide is Putative nickel-responsive regulator (Methanococcoides burtonii (strain DSM 6242 / NBRC 107633 / OCM 468 / ACE-M)).